Reading from the N-terminus, the 286-residue chain is uncharacterized protein (286 aa).

In terms of domain architecture, Radical SAM core spans 2 to 221 (VDGMKHLILK…PIYIKNLQKR (220 aa)). 3 residues coordinate [4Fe-4S] cluster: Cys16, Cys20, and Cys23.

It belongs to the radical SAM superfamily. Anaerobic sulfatase-maturating enzyme family. The cofactor is [4Fe-4S] cluster.

This is an uncharacterized protein from Methanocaldococcus jannaschii (strain ATCC 43067 / DSM 2661 / JAL-1 / JCM 10045 / NBRC 100440) (Methanococcus jannaschii).